The primary structure comprises 818 residues: Piwi-like protein (818 aa).

Residues 220–339 (RINRVLNDNS…ITGELCFLCG (120 aa)) form the PAZ domain. The region spanning 501–800 (KIALVFVPDD…LAELIGKVHK (300 aa)) is the Piwi domain.

The protein belongs to the argonaute family. Piwi subfamily.

This Dugesia japonica (Planarian) protein is Piwi-like protein (iwi).